The following is a 270-amino-acid chain: Cytosolic Fe-S cluster assembly factor NUBP2 homolog (270 aa).

An ATP-binding site is contributed by 21-28 (GKGGVGKS). [4Fe-4S] cluster-binding residues include Cys-195 and Cys-198.

This sequence belongs to the Mrp/NBP35 ATP-binding proteins family. NUBP2/CFD1 subfamily. Heterotetramer of 2 NUBP1 and 2 NUBP2 chains. It depends on [4Fe-4S] cluster as a cofactor.

The protein localises to the cytoplasm. Component of the cytosolic iron-sulfur (Fe/S) protein assembly (CIA) machinery. Required for maturation of extramitochondrial Fe-S proteins. The NUBP1-NUBP2 heterotetramer forms a Fe-S scaffold complex, mediating the de novo assembly of an Fe-S cluster and its transfer to target apoproteins. The chain is Cytosolic Fe-S cluster assembly factor NUBP2 homolog from Nematostella vectensis (Starlet sea anemone).